Consider the following 173-residue polypeptide: Terpene cyclase subB (173 aa).

4 helical membrane-spanning segments follow: residues 11–31, 51–71, 112–132, and 141–161; these read PGYL…GLGW, ALMP…IYPF, LPFI…ALAL, and AFSA…QLLS.

The protein belongs to the paxB family.

It localises to the membrane. The protein operates within secondary metabolite biosynthesis; terpenoid biosynthesis. Functionally, terpene cyclase; part of the gene cluster that mediates the biosynthesis of the immunosuppressants subglutinols, meroterpenoids consisting of an alpha-pyrone (4-hydroxy-5,6-dimethyl-2-pyrone) moiety attached to a decalin core fused to a five-membered cyclic ether carrying a prenylside chain. The first step of the pathway is the synthesis of the alpha-pyrone moiety by the polyketide synthase subA via condensation of one acetyl-CoA starter unit with 3 malonyl-CoA units and 2 methylations. The alpha-pyrone is then combined with geranylgeranyl pyrophosphate (GGPP) formed by the GGPP synthase subD through the action of the prenyltransferase subC to yield a linear alpha-pyrone diterpenoid. Subsequent steps in the subglutinol biosynthetic pathway involve the decalin core formation, which is thought to be initiated by the epoxidation of the C10-C11 olefin by the FAD-dependent oxidoreductase subE. The following cyclization cascade would be catalyzed by the terpene cyclase subB. Lastly, the FAD-dependent dehydrogenase subF probably catalyzes the five-membered cyclic ether formation to complete the formation of subglutinol A. Subsequent redox reactions appear to give rise to subglutinol C and D, however, it remains unclear which enzymes are responsible for these transformations. SubD may have secondary function in the conversion of the identified subglutinols to subglutinol analog 45, which seems to be the major product of the cluster. The protein is Terpene cyclase subB of Metarhizium robertsii (strain ARSEF 23 / ATCC MYA-3075) (Metarhizium anisopliae (strain ARSEF 23)).